We begin with the raw amino-acid sequence, 727 residues long: MNQKLLKLENLLRFHTICRQVHSPSQRRLLAWCRHGFAPASSVWRDLLGARSWQTDMLIGSALHQHRLLVTKKEKRPPRSQLSPVKTKKEVEVWVGMTVEDLASAMAKDIDCVYEALLNTAIDVDSLEANSHLDEVWIKEVIKKAGMKLKWSKLKQERIRENKDAVRRPGTDPALLKPRSPVVTVMGHVDHGKTTLLDKLRETQVAAMEVGGITQHIGAFLVSLPSGEKITFLDTPGHAAFSAMRARGAQVTDIVVLVVAADDGVMKQTVESIQHAKDAEVPIILAINKCDKTDADPEKVKKELLAYDVVCEEYGGDVQAVHVSALTGDNLMALAEATIALAEILELKADPTGPVEGTVIESFTDKGRGPVTTAIIQRGTLRKGSILVAGKSWAKVRLIFDENGKILNEAYPSMPVGIIGWRDLPSAGDEILEVESEPRAREVIEWRKSEQKEEKGKDDLKIMEEKRREHQEAHRKAREKYGSLHWKERSYIKFLERKQQRPLKPKEKVERQSNVLPIIIKGDVDGSVEAILNLLDTYDASHECELELVHFGLGDISENDVTFAETFDGVIYGFNVEAGSAIQQSAAQKGVKIKLHKIIYHLIEDLQEELSSRLPHTLEEYPIGEASILATFTVTEGKKKIPVAGCRVQKGQLERHKKFKLIRNGQVIWKGSLTSLKHHKDDISVIKTGMDCGLSLDEEKVEFKPGDQVICYEENKVPTKTSWDPGF.

The N-terminal 29 residues, M1–L29, are a transit peptide targeting the mitochondrion. Residues P178–E346 enclose the tr-type G domain. A G1 region spans residues G187–T194. G187 to T194 provides a ligand contact to GTP. The G2 stretch occupies residues G212–H216. Residues D234–G237 and N288–D291 contribute to the GTP site. The segment at D234–G237 is G3. The tract at residues N288–D291 is G4. Residues S324–L326 form a G5 region. The residue at position 688 (T688) is a Phosphothreonine.

It belongs to the TRAFAC class translation factor GTPase superfamily. Classic translation factor GTPase family. IF-2 subfamily. Monomer.

It is found in the mitochondrion. Its function is as follows. One of the essential components for the initiation of protein synthesis. Protects formylmethionyl-tRNA from spontaneous hydrolysis and promotes its binding to the 30S ribosomal subunits. Also involved in the hydrolysis of GTP during the formation of the 70S ribosomal complex. This Mus musculus (Mouse) protein is Translation initiation factor IF-2, mitochondrial (Mtif2).